Consider the following 409-residue polypeptide: S-adenosylmethionine synthase (409 aa).

His-15 lines the ATP pocket. Residue Asp-17 coordinates Mg(2+). Glu-43 is a binding site for K(+). L-methionine contacts are provided by Glu-56 and Gln-100. The interval 100–110 is flexible loop; the sequence is QSSDIAQGVNE. ATP-binding positions include 171–173, 248–249, Asp-257, 263–264, Ala-280, and Lys-284; these read DGK, KF, and RK. Position 257 (Asp-257) interacts with L-methionine. Residue Lys-288 coordinates L-methionine.

It belongs to the AdoMet synthase family. In terms of assembly, homotetramer; dimer of dimers. Requires Mg(2+) as cofactor. K(+) is required as a cofactor.

It is found in the cytoplasm. It catalyses the reaction L-methionine + ATP + H2O = S-adenosyl-L-methionine + phosphate + diphosphate. It participates in amino-acid biosynthesis; S-adenosyl-L-methionine biosynthesis; S-adenosyl-L-methionine from L-methionine: step 1/1. Catalyzes the formation of S-adenosylmethionine (AdoMet) from methionine and ATP. The overall synthetic reaction is composed of two sequential steps, AdoMet formation and the subsequent tripolyphosphate hydrolysis which occurs prior to release of AdoMet from the enzyme. The polypeptide is S-adenosylmethionine synthase (Prochlorococcus marinus (strain NATL1A)).